The sequence spans 192 residues: MASKGPSASASTENSNAGGPSGSSNGTGESGGQDSTFECNICLDTAKDAVISLCGHLFCWPCLHQWLETRPNRQVCPVCKAGISRDKVIPLYGRGSTGQQDPREKTPPRPQGQRPEPENRGGFQGFGFGDGGFQMSFGIGAFPFGIFATAFNINDGRPPPAVPGTPQYVDEQFLSRLFLFVALVIMFWLLIA.

Residues 1 to 13 (MASKGPSASASTE) are compositionally biased toward polar residues. The interval 1–30 (MASKGPSASASTENSNAGGPSGSSNGTGES) is disordered. Residues 1 to 130 (MASKGPSASA…GGFQGFGFGD (130 aa)) are Cytoplasmic-facing. Residues 14–27 (NSNAGGPSGSSNGT) are compositionally biased toward low complexity. The segment at 29–80 (ESGGQDSTFECNICLDTAKDAVISLCGHLFCWPCLHQWLETRPNRQVCPVCK) is required for ubiquitin ligase activity and protection against ER stress-induced cell death. An RING-type zinc finger spans residues 39 to 80 (CNICLDTAKDAVISLCGHLFCWPCLHQWLETRPNRQVCPVCK). Residues 90 to 123 (PLYGRGSTGQQDPREKTPPRPQGQRPEPENRGGF) form a disordered region. Residues 131-151 (GGFQMSFGIGAFPFGIFATAF) form a helical membrane-spanning segment. The Mitochondrial intermembrane portion of the chain corresponds to 152–171 (NINDGRPPPAVPGTPQYVDE). Residues 172–192 (QFLSRLFLFVALVIMFWLLIA) form a helical membrane-spanning segment.

Interacts with ATG5 and BNIP1. Ubiquitously expressed with high expression in testis.

The protein localises to the mitochondrion outer membrane. It localises to the endoplasmic reticulum membrane. The enzyme catalyses S-ubiquitinyl-[E2 ubiquitin-conjugating enzyme]-L-cysteine + [acceptor protein]-L-lysine = [E2 ubiquitin-conjugating enzyme]-L-cysteine + N(6)-ubiquitinyl-[acceptor protein]-L-lysine.. The protein operates within protein modification; protein ubiquitination. In terms of biological role, E3 ubiquitin-protein ligase that regulates selective mitochondrial autophagy by mediating 'Lys-63'-linked polyubiquitination of BNIP1. Acts in the endoplasmic reticulum (ER)-associated degradation (ERAD) pathway, which targets misfolded proteins that accumulate in the endoplasmic reticulum (ER) for ubiquitination and subsequent proteasome-mediated degradation. Protects cells from ER stress-induced apoptosis. Responsible for the cotranslational ubiquitination and degradation of CFTR in the ERAD pathway. Also acts as a regulator of the innate antiviral response by catalyzing 'Lys-27'-linked polyubiquitination of CGAS, thereby promoting CGAS cyclic GMP-AMP synthase activity. Preferentially associates with the E2 enzymes UBE2J1 and UBE2J2. The chain is E3 ubiquitin-protein ligase RNF185 (Rnf185) from Mus musculus (Mouse).